Consider the following 355-residue polypeptide: Peptide chain release factor 1 (355 aa).

Glutamine 231 is subject to N5-methylglutamine.

The protein belongs to the prokaryotic/mitochondrial release factor family. In terms of processing, methylated by PrmC. Methylation increases the termination efficiency of RF1.

The protein resides in the cytoplasm. Peptide chain release factor 1 directs the termination of translation in response to the peptide chain termination codons UAG and UAA. The polypeptide is Peptide chain release factor 1 (Aliarcobacter butzleri (strain RM4018) (Arcobacter butzleri)).